We begin with the raw amino-acid sequence, 459 residues long: Glycosyl hydrolase family 109 protein 1 (459 aa).

The tat-type signal signal peptide spans 1 to 31 (MHNIHRRHFLKAAGAVTAGLVTANIALNANA). NAD(+) contacts are provided by residues 64 to 65 (ER), D86, 135 to 138 (WEWH), 155 to 156 (EV), and N184. Substrate-binding positions include Y213, R232, 244–247 (YPTH), and Y326. Y244 contributes to the NAD(+) binding site.

This sequence belongs to the Gfo/Idh/MocA family. Glycosyl hydrolase 109 subfamily. The cofactor is NAD(+). In terms of processing, predicted to be exported by the Tat system. The position of the signal peptide cleavage has not been experimentally proven.

Its function is as follows. Glycosidase. This chain is Glycosyl hydrolase family 109 protein 1, found in Shewanella sp. (strain MR-4).